We begin with the raw amino-acid sequence, 363 residues long: Phospho-N-acetylmuramoyl-pentapeptide-transferase (363 aa).

Helical transmembrane passes span A27–A47, T76–L96, T97–A117, L137–A157, W171–G191, G202–V222, V226–C246, A248–M268, T271–L291, V292–F312, and K340–L360.

Belongs to the glycosyltransferase 4 family. MraY subfamily. It depends on Mg(2+) as a cofactor.

Its subcellular location is the cell inner membrane. The catalysed reaction is UDP-N-acetyl-alpha-D-muramoyl-L-alanyl-gamma-D-glutamyl-meso-2,6-diaminopimeloyl-D-alanyl-D-alanine + di-trans,octa-cis-undecaprenyl phosphate = di-trans,octa-cis-undecaprenyl diphospho-N-acetyl-alpha-D-muramoyl-L-alanyl-D-glutamyl-meso-2,6-diaminopimeloyl-D-alanyl-D-alanine + UMP. It participates in cell wall biogenesis; peptidoglycan biosynthesis. In terms of biological role, catalyzes the initial step of the lipid cycle reactions in the biosynthesis of the cell wall peptidoglycan: transfers peptidoglycan precursor phospho-MurNAc-pentapeptide from UDP-MurNAc-pentapeptide onto the lipid carrier undecaprenyl phosphate, yielding undecaprenyl-pyrophosphoryl-MurNAc-pentapeptide, known as lipid I. The sequence is that of Phospho-N-acetylmuramoyl-pentapeptide-transferase from Gluconacetobacter diazotrophicus (strain ATCC 49037 / DSM 5601 / CCUG 37298 / CIP 103539 / LMG 7603 / PAl5).